A 109-amino-acid polypeptide reads, in one-letter code: FK506-binding protein (109 aa).

The PPIase FKBP-type domain occupies 20–108 (GKEITVHYTG…IFEVELLKVY (89 aa)).

The protein belongs to the FKBP-type PPIase family.

It catalyses the reaction [protein]-peptidylproline (omega=180) = [protein]-peptidylproline (omega=0). Inhibited by FK506. Functionally, PPIases accelerate the folding of proteins. This Neisseria meningitidis serogroup B (strain ATCC BAA-335 / MC58) protein is FK506-binding protein (fbp).